The chain runs to 178 residues: Orotate phosphoribosyltransferase (178 aa).

5-phospho-alpha-D-ribose 1-diphosphate is bound by residues Arg92, Lys93, Lys96, and 118–126 (EDVITTGSS). The orotate site is built by Thr122 and Arg150.

It belongs to the purine/pyrimidine phosphoribosyltransferase family. PyrE subfamily. In terms of assembly, homodimer. Mg(2+) is required as a cofactor.

The catalysed reaction is orotidine 5'-phosphate + diphosphate = orotate + 5-phospho-alpha-D-ribose 1-diphosphate. Its pathway is pyrimidine metabolism; UMP biosynthesis via de novo pathway; UMP from orotate: step 1/2. In terms of biological role, catalyzes the transfer of a ribosyl phosphate group from 5-phosphoribose 1-diphosphate to orotate, leading to the formation of orotidine monophosphate (OMP). The chain is Orotate phosphoribosyltransferase from Archaeoglobus fulgidus (strain ATCC 49558 / DSM 4304 / JCM 9628 / NBRC 100126 / VC-16).